A 151-amino-acid polypeptide reads, in one-letter code: Neuroglobin (151 aa).

Residues 1-149 (MERPESELIR…VVQAMSRGWD (149 aa)) enclose the Globin domain. His64 and His96 together coordinate heme b.

Belongs to the globin family. As to quaternary structure, monomer. Homodimer and homotetramer; disulfide-linked. Mainly monomeric but also detected as part of homodimers and homotetramers. Interacts with 14-3-3 proteins; regulates the phosphorylation of NGB. Could interact (ferrous form) with G-alpha(i) proteins (GTP-bound form). Post-translationally, phosphorylated during hypoxia by ERK1/ERK2. Phosphorylation regulates the heme pocket hexacoordination preventing the association of His-64 with the heme metal center. Thereby, promotes the access of dioxygen and nitrite to the heme and stimulates the nitrite reductase activity. Phosphorylation during hypoxia is stabilized by 14-3-3 proteins. In terms of tissue distribution, widely distributed throughout the adult brain, including cerebral cortex, hippocampus, thalamus, hypothalamus, olfactory bulb, and cerebellum.

The protein resides in the cytoplasm. It localises to the cytosol. It is found in the mitochondrion matrix. It catalyses the reaction Fe(III)-heme b-[protein] + nitric oxide + H2O = Fe(II)-heme b-[protein] + nitrite + 2 H(+). Functionally, monomeric globin with a bis-histidyl six-coordinate heme-iron atom through which it can bind dioxygen, carbon monoxide and nitric oxide. Could help transport oxygen and increase its availability to the metabolically active neuronal tissues, though its low quantity in tissues as well as its high affinity for dioxygen, which may limit its oxygen-releasing ability, argue against it. The ferrous/deoxygenated form exhibits a nitrite reductase activity and it could produce nitric oxide which in turn inhibits cellular respiration in response to hypoxia. In its ferrous/deoxygenated state, it may also exhibit GDI (Guanine nucleotide Dissociation Inhibitor) activity toward heterotrimeric G-alpha proteins, thereby regulating signal transduction to facilitate neuroprotective responses in the wake of hypoxia and associated oxidative stress. In Rattus norvegicus (Rat), this protein is Neuroglobin.